A 160-amino-acid chain; its full sequence is Transcription elongation factor GreA (160 aa).

The stretch at 14–76 (VKKLEEELEY…QLENMLKNAS (63 aa)) forms a coiled coil.

It belongs to the GreA/GreB family.

Its function is as follows. Necessary for efficient RNA polymerase transcription elongation past template-encoded arresting sites. The arresting sites in DNA have the property of trapping a certain fraction of elongating RNA polymerases that pass through, resulting in locked ternary complexes. Cleavage of the nascent transcript by cleavage factors such as GreA or GreB allows the resumption of elongation from the new 3'terminus. GreA releases sequences of 2 to 3 nucleotides. The chain is Transcription elongation factor GreA from Clostridium botulinum (strain Okra / Type B1).